The primary structure comprises 341 residues: MSSAVVHSDDLMEPTLQSVVNQKTLRWIFVGGKGGVGKTTTSCSLAIQLAKVRKSVLLISTDPAHNLSDAFGQKFGKEARLVDGYTNLSAMEIDPNGSIQDLLASGEGQGDDPLSGMGVGGMMQDLAFSIPGVDEAMSFAEVLKQVKSLSYEVIVFDTAPTGHTLRFLQFPTVLEKALAKLSQLSSQFGPMLNSILGSRGGLPGGQNIDELLQKMESLRETISEVNSQFKDADLTTFVCVCIAEFLSLYETERMIQELTSYNIDTHAIVVNQLLFPKQSSECEQCNARRKMQKKYLEQIEELYEDFNVVRMPLLVEEVRGKEKLEKFSDMLVNPYVPPEGN.

33 to 40 (KGGVGKTT) provides a ligand contact to ATP. Residue D62 is part of the active site. Residues E244 and N271 each coordinate ATP. C282 and C285 together coordinate Zn(2+).

The protein belongs to the arsA ATPase family. As to quaternary structure, homodimer.

The protein localises to the cytoplasm. Its subcellular location is the endoplasmic reticulum. Functionally, ATPase required for the post-translational delivery of tail-anchored (TA) proteins to the endoplasmic reticulum. Recognizes and selectively binds the transmembrane domain of TA proteins in the cytosol. This complex then targets to the endoplasmic reticulum by membrane-bound receptors, where the tail-anchored protein is released for insertion. This process is regulated by ATP binding and hydrolysis. ATP binding drives the homodimer towards the closed dimer state, facilitating recognition of newly synthesized TA membrane proteins. ATP hydrolysis is required for insertion. Subsequently, the homodimer reverts towards the open dimer state, lowering its affinity for the membrane-bound receptor, and returning it to the cytosol to initiate a new round of targeting. This is ATPase get3 (get3) from Aspergillus niger (strain ATCC MYA-4892 / CBS 513.88 / FGSC A1513).